The primary structure comprises 296 residues: Bifunctional protein FolD (296 aa).

NADP(+) contacts are provided by residues 168-170, threonine 197, and valine 238; that span reads GRS.

Belongs to the tetrahydrofolate dehydrogenase/cyclohydrolase family. Homodimer.

The enzyme catalyses (6R)-5,10-methylene-5,6,7,8-tetrahydrofolate + NADP(+) = (6R)-5,10-methenyltetrahydrofolate + NADPH. It carries out the reaction (6R)-5,10-methenyltetrahydrofolate + H2O = (6R)-10-formyltetrahydrofolate + H(+). It functions in the pathway one-carbon metabolism; tetrahydrofolate interconversion. Its function is as follows. Catalyzes the oxidation of 5,10-methylenetetrahydrofolate to 5,10-methenyltetrahydrofolate and then the hydrolysis of 5,10-methenyltetrahydrofolate to 10-formyltetrahydrofolate. This is Bifunctional protein FolD from Desulfotalea psychrophila (strain LSv54 / DSM 12343).